The primary structure comprises 979 residues: Protein argonaute PNH1 (979 aa).

The interval M1–P95 is disordered. The span at A54–E67 shows a compositional bias: low complexity. Residues G77–G86 are compositionally biased toward basic residues. Residues P333–E446 enclose the PAZ domain. Residues L620–E941 form the Piwi domain.

Belongs to the argonaute family. Ago subfamily.

The protein localises to the cytoplasm. In terms of biological role, probably involved in the RNA silencing pathway. May bind to short RNAs such as microRNAs (miRNAs) or short interfering RNAs (siRNAs), and represses the translation of mRNAs which are complementary to them. Plays a role in the maintenance of the indeterminate state of the stem cells in the shoot apical meristem (SAM). Regulates leaf formation through vascular development and may be involved in determining the central domain of the leaf founder region. The sequence is that of Protein argonaute PNH1 (PHN1) from Oryza sativa subsp. japonica (Rice).